Consider the following 589-residue polypeptide: uncharacterized protein (589 aa).

The next 5 helical transmembrane spans lie at 11 to 31 (LNWILTALFWVVLCFSVTMLA), 57 to 77 (LILMLLVLFIMILLEVRFSVL), 97 to 117 (FWFFAKLNALLVVAQVIHAIA), 190 to 210 (IEFTIILWSLSGVLTLFGFNI), and 213 to 233 (GVVFFIYAFIIFATLMSVWIG). The ABC transmembrane type-1 domain maps to 57-357 (LILMLLVLFI…FRLFYEQFTL (301 aa)). The ABC transporter domain occupies 390 to 587 (VALKNFGIKD…QLKLDVCLLC (198 aa)). Residue 423-430 (GASGTGKT) participates in ATP binding.

This sequence belongs to the ABC transporter superfamily.

The protein resides in the cell inner membrane. This is an uncharacterized protein from Haemophilus influenzae (strain ATCC 51907 / DSM 11121 / KW20 / Rd).